The sequence spans 131 residues: MPTIQQLVRKGRKNIKKKSKSMALNCCPQRKGVCTRVYTTTPKKPNSAMRKVARVRLTNGKEVNAYIPGEGHNLQEHSIVLIRGGRVKDLPGVRYHIIRGALDTAGVKDRKKARSKYGAKCSKKINKINKK.

At D89 the chain carries 3-methylthioaspartic acid.

Belongs to the universal ribosomal protein uS12 family. As to quaternary structure, part of the 30S ribosomal subunit. Contacts proteins S8 and S17. May interact with IF1 in the 30S initiation complex.

In terms of biological role, with S4 and S5 plays an important role in translational accuracy. Interacts with and stabilizes bases of the 16S rRNA that are involved in tRNA selection in the A site and with the mRNA backbone. Located at the interface of the 30S and 50S subunits, it traverses the body of the 30S subunit contacting proteins on the other side and probably holding the rRNA structure together. The combined cluster of proteins S8, S12 and S17 appears to hold together the shoulder and platform of the 30S subunit. This Karelsulcia muelleri (strain GWSS) (Sulcia muelleri) protein is Small ribosomal subunit protein uS12.